The sequence spans 209 residues: Thymidylate kinase (209 aa).

Residue 10–17 coordinates ATP; sequence GPDGAGKT.

Belongs to the thymidylate kinase family.

The enzyme catalyses dTMP + ATP = dTDP + ADP. In terms of biological role, phosphorylation of dTMP to form dTDP in both de novo and salvage pathways of dTTP synthesis. This chain is Thymidylate kinase, found in Pediococcus pentosaceus (strain ATCC 25745 / CCUG 21536 / LMG 10740 / 183-1w).